We begin with the raw amino-acid sequence, 284 residues long: MDAIKKKMQAMKVDRENAQDLAEQMEQKLKDTETAKAKLEEEFNELQKKLTATENNYDTVNEQLQEANTKLENSEKQITQLESDVGGLQRRLTLLEEDYERSEEKLNSTTEKLEEASKAADESERNRKVLEGRSNSYEERIDELEKQLETAKNVATDADHKFDEAARKLAITEVDLERAETRLEAADAKVLELEEELTVVGANIKTLQVQNDQASQREDSYEETIRDLTKSLKDAENRATEAERQVVKLQKEVDRLEDELLAEKERYKAISDDLDQTFAEIAGY.

Disordered regions lie at residues 1–27 (MDAI…QMEQ) and 99–131 (YERS…KVLE). Residues 1-273 (MDAIKKKMQA…KERYKAISDD (273 aa)) adopt a coiled-coil conformation. A compositionally biased stretch (basic and acidic residues) spans 102–131 (SEEKLNSTTEKLEEASKAADESERNRKVLE).

This sequence belongs to the tropomyosin family. As to quaternary structure, homodimer.

Tropomyosin, in association with the troponin complex, plays a central role in the calcium dependent regulation of muscle contraction. This is Tropomyosin from Mimachlamys nobilis (Noble scallop).